A 423-amino-acid chain; its full sequence is MKPNFSLRLRIFNLNCWGIPYLSKHRADRMRRLGDFLNQESFDLALLEEVWSEQDFQYLRQKLSPTYPAAHHFRSGIIGSGLCVFSKHPIQELTQHIYTLNGYPYMIHHGDWFSGKAVGLLVLHLSGMVLNAYVTHLHAEYNRQKDIYLAHRVAQAWELAQFIHHTSKKADVVLLCGDLNMHPEDLGCCLLKEWTGLHDAYLETRDFKGSEEGNTMVPKNCYVSQQELKPFPFGVRIDYVLYKAVSGFYISCKSFETTTGFDPHRGTPLSDHEALMATLFVRHSPPQQNPSSTHGPAERSPLMCVLKEAWTELGLGMAQARWWATFASYVIGLGLLLLALLCVLAAGGGAGEAAILLWTPSVGLVLWAGAFYLFHVQEVNGLYRAQAELQHVLGRAREAQDLGPEPQPALLLGQQEGDRTKEQ.

Glu49 lines the Mg(2+) pocket. The active-site Proton acceptor is the His272. A run of 2 helical transmembrane segments spans residues 330–350 (VIGL…GGGA) and 354–374 (AILL…FYLF). The segment at 400-423 (QDLGPEPQPALLLGQQEGDRTKEQ) is disordered.

Belongs to the neutral sphingomyelinase family. It depends on Mg(2+) as a cofactor.

The protein localises to the cell membrane. The catalysed reaction is a sphingomyelin + H2O = phosphocholine + an N-acylsphing-4-enine + H(+). It catalyses the reaction an N-(acyl)-sphingosylphosphocholine + H2O = an N-acyl-sphingoid base + phosphocholine + H(+). The enzyme catalyses 1-O-octadecyl-sn-glycero-3-phosphocholine + H2O = 1-O-octadecyl-sn-glycerol + phosphocholine + H(+). It carries out the reaction 1-O-hexadecyl-sn-glycero-3-phosphocholine + H2O = 1-O-hexadecyl-sn-glycerol + phosphocholine + H(+). The catalysed reaction is 1-hexadecanoyl-sn-glycero-3-phosphocholine + H2O = 1-hexadecanoyl-sn-glycerol + phosphocholine + H(+). It catalyses the reaction a sphingosylphosphocholine + H2O = a sphingoid base + phosphocholine + H(+). It functions in the pathway lipid metabolism; sphingolipid metabolism. In terms of biological role, catalyzes, at least in vitro, the hydrolysis of sphingomyelin to form ceramide and phosphocholine. Also hydrolyzes 1-O-alkyl-2-lyso-sn-glycero-3-phosphocholine (lyso-platelet-activating factor) in vivo. Also acts on 1-acyl-2-lyso-sn-glycero-3-phosphocholine (lyso-PC) and sphingosylphosphocholine. The protein is Sphingomyelin phosphodiesterase 2 of Homo sapiens (Human).